The primary structure comprises 154 residues: NADPH-dependent 7-cyano-7-deazaguanine reductase (154 aa).

The active-site Thioimide intermediate is the Cys-54. Asp-61 functions as the Proton donor in the catalytic mechanism. Residues 76-78 and 95-96 contribute to the substrate site; these read VES and HE.

It belongs to the GTP cyclohydrolase I family. QueF type 1 subfamily.

Its subcellular location is the cytoplasm. It carries out the reaction 7-aminomethyl-7-carbaguanine + 2 NADP(+) = 7-cyano-7-deazaguanine + 2 NADPH + 3 H(+). It functions in the pathway tRNA modification; tRNA-queuosine biosynthesis. Catalyzes the NADPH-dependent reduction of 7-cyano-7-deazaguanine (preQ0) to 7-aminomethyl-7-deazaguanine (preQ1). This Porphyromonas gingivalis (strain ATCC 33277 / DSM 20709 / CIP 103683 / JCM 12257 / NCTC 11834 / 2561) protein is NADPH-dependent 7-cyano-7-deazaguanine reductase.